Here is a 562-residue protein sequence, read N- to C-terminus: Malate synthase (562 aa).

The active-site Proton acceptor is the Arg177. Asp463 serves as the catalytic Proton donor. The Microbody targeting signal signature appears at Ser560–Leu562.

The protein belongs to the malate synthase family.

It is found in the glyoxysome. It catalyses the reaction glyoxylate + acetyl-CoA + H2O = (S)-malate + CoA + H(+). The protein operates within carbohydrate metabolism; glyoxylate cycle; (S)-malate from isocitrate: step 2/2. Functionally, does not seem to be essential for lipid utilization and gluconeogenesis in seedlings. The chain is Malate synthase from Arabidopsis thaliana (Mouse-ear cress).